A 209-amino-acid chain; its full sequence is MKRTAVIFIEKATPSTITQFHDILSTHVLAIQEKWSFELKTFRSSIKNLPPSDTKVLYSLQLTHRDNQTVVIKNQSAIVTGQHSTDALTSNGCSSGFPEPFDNILTSKLSNIWTQRQSTKGNFGTTYKTSELIIRASNVFSSSGFKGLLLEIECTDPVSAEEFDRRVANIRAMLSEIDINDYKLNKDEMNEGKPVFLCDLAYQYVKVLD.

It belongs to the Mediator complex subunit 20 family. As to quaternary structure, component of the Mediator complex.

The protein resides in the nucleus. Component of the Mediator complex, a coactivator involved in the regulated transcription of nearly all RNA polymerase II-dependent genes. Mediator functions as a bridge to convey information from gene-specific regulatory proteins to the basal RNA polymerase II transcription machinery. Mediator is recruited to promoters by direct interactions with regulatory proteins and serves as a scaffold for the assembly of a functional preinitiation complex with RNA polymerase II and the general transcription factors. The sequence is that of Mediator of RNA polymerase II transcription subunit 20 (SRB2) from Eremothecium gossypii (strain ATCC 10895 / CBS 109.51 / FGSC 9923 / NRRL Y-1056) (Yeast).